A 453-amino-acid polypeptide reads, in one-letter code: MPVSRMMMESNTMAKEMAVRHHLLPGSPRRRTAHNLSSSSLRKSSDASLLHKVPCAALRSLLANLNDVLLTTRLFLLFPAVLLAIAATYLHFGQVWVFVLSLIGLVPLAERLSFLTEQIAFYTGPTVGGLLNATFGNVTEVIIALLALREGKIEVVKCSLLGSILSNLLLVLGTSLFLAGIANLRAHQPYDTKQAHVNTALLMLAVLCHSLPLMLRYAVTSGDHAIVSGDAALHLSRACSILMLIAYLAYLFFQLNTHRQLFEPQQVEDDDDDDLVIAQDDEPVLGFSSAMIWLALMTLLTALLSGYVVSTIEAASESWELSVSFISIILLPIVGNAAEHAGAVIFALKNKMDITLGVSLGSATQISMFVVPVSVIVAWTMGIPMDLDFNLLETGSLFLAILVTAFTLQEGESHYLKGLILVLCYAVISVCFFVIRRRSAGGTDGVHHLDVIV.

Residues M1–D67 lie on the Cytoplasmic side of the membrane. The chain crosses the membrane as a helical span at residues V68–I85. The Extracellular portion of the chain corresponds to A86–H91. The helical transmembrane segment at F92–A109 threads the bilayer. Topologically, residues E110–T126 are cytoplasmic. The chain crosses the membrane as a helical span at residues V127–A147. The segment at G136 to V171 is cation selection. Over L148–L160 the chain is Extracellular. The helical transmembrane segment at L161–I181 threads the bilayer. Residues A182 to Q194 are Cytoplasmic-facing. The chain crosses the membrane as a helical span at residues A195–L215. Residues R216–A232 lie on the Extracellular side of the membrane. Residues L233 to F253 traverse the membrane as a helical segment. Residues Q254–P283 are Cytoplasmic-facing. The helical transmembrane segment at V284–L304 threads the bilayer. The Extracellular portion of the chain corresponds to S305–S327. The helical transmembrane segment at I328–L348 threads the bilayer. The cation selection stretch occupies residues G335–V370. Topologically, residues K349–T364 are cytoplasmic. A helical membrane pass occupies residues Q365–M385. Residues D386–D388 lie on the Extracellular side of the membrane. The chain crosses the membrane as a helical span at residues F389–Q409. The Cytoplasmic portion of the chain corresponds to E410 to H414. The helical transmembrane segment at Y415–I435 threads the bilayer. Residues R436 to V453 lie on the Extracellular side of the membrane.

This sequence belongs to the Ca(2+):cation antiporter (CaCA) (TC 2.A.19) family. Cation/proton exchanger (CAX) subfamily. Expressed in embryo and roots.

The protein localises to the vacuole membrane. Functionally, vacuolar cation/proton exchanger (CAX). Translocates Ca(2+) and other metal ions into vacuoles using the proton gradient formed by H(+)-ATPase and H(+)-pyrophosphatase. In Oryza sativa subsp. japonica (Rice), this protein is Vacuolar cation/proton exchanger 1b (CAX1b).